Here is a 238-residue protein sequence, read N- to C-terminus: uncharacterized protein (238 aa).

A signal peptide spans 1 to 28 (MSRNSRGSGRYVFVVLACVFGYTRAVHA).

This is an uncharacterized protein from Treponema pallidum (strain Nichols).